We begin with the raw amino-acid sequence, 429 residues long: BURP domain-containing protein 3 (429 aa).

An N-terminal signal peptide occupies residues 1 to 21 (MDRLLACLLGFLLIASVGSHA). Residues 59–81 (GGGVHVDAGHGKPGGTTVDVGKG) form a disordered region. One can recognise a BURP domain in the interval 213–428 (FFLEKDLHPG…PQDHVVWTRS (216 aa)).

As to expression, expressed in stems, leaves, shoot, panicles and stamen.

This is BURP domain-containing protein 3 (BURP3) from Oryza sativa subsp. japonica (Rice).